A 323-amino-acid polypeptide reads, in one-letter code: 4-hydroxyphenylpyruvate 3-dimethylallyltransferase (323 aa).

Substrate contacts are provided by arginine 160 and glutamate 281.

Belongs to the aromatic prenyltransferase family. Monomer.

The protein localises to the cytoplasm. The catalysed reaction is 3-(4-hydroxyphenyl)pyruvate + dimethylallyl diphosphate = 3-dimethylallyl-4-hydroxyphenylpyruvate + diphosphate. It functions in the pathway antibiotic biosynthesis; novobiocin biosynthesis. In terms of biological role, magnesium-independent aromatic prenyltransferase that catalyzes the irreversible transfer of a dimethylallyl group to 4-hydroxyphenylpyruvate to produce the ring A structure in the novobiocin biosynthesis pathway. Novobiocin is an aminocoumarin family antibiotic that targets bacterial DNA gyrases. It is able to prenylate many different compounds, including the phenylpropanoids 4-coumarate and caffeate, the plant polyketide resveratrol, the (iso)flavonoid naringenin, apigenin, daidzein and genistein, and the dihydroxynaphthalenes 1,6-DHN and 2,7-DHN. This chain is 4-hydroxyphenylpyruvate 3-dimethylallyltransferase, found in Streptomyces niveus (Streptomyces spheroides).